The sequence spans 638 residues: Influenza virus NS1A-binding protein homolog (638 aa).

A BTB domain is found at 32 to 99 (CDVKLQVCGH…AYTSQLKAET (68 aa)). Residues 134–233 (GISCRNFVNT…YYSADHKLLD (100 aa)) form the BACK domain. The segment at 251–273 (IQKKSPRENNHKNLISSSSGSLS) is disordered. Kelch repeat units follow at residues 365-411 (KLIA…VLMD), 412-459 (HLYV…ALNG), 461-508 (LYVV…ELGN), 509-555 (KIYI…VYDG), 557-602 (LLVV…AVGN), and 604-638 (IYAA…LCES).

The protein localises to the cytoplasm. The protein resides in the cytoskeleton. It localises to the nucleus. Plays a role in cell division and in the dynamic organization of the actin skeleton as a stabilizer of actin filaments by association with F-actin through Kelch repeats. This is Influenza virus NS1A-binding protein homolog (ivns1abp) from Xenopus laevis (African clawed frog).